The sequence spans 288 residues: Light-independent protochlorophyllide reductase iron-sulfur ATP-binding protein (288 aa).

ATP-binding positions include 10-15 and Lys-39; that span reads GIGKST. A Mg(2+)-binding site is contributed by Ser-14. [4Fe-4S] cluster contacts are provided by Cys-95 and Cys-129. 180–181 is a binding site for ATP; it reads NR.

It belongs to the NifH/BchL/ChlL family. As to quaternary structure, homodimer. Protochlorophyllide reductase is composed of three subunits; ChlL, ChlN and ChlB. Requires [4Fe-4S] cluster as cofactor.

It carries out the reaction chlorophyllide a + oxidized 2[4Fe-4S]-[ferredoxin] + 2 ADP + 2 phosphate = protochlorophyllide a + reduced 2[4Fe-4S]-[ferredoxin] + 2 ATP + 2 H2O. The protein operates within porphyrin-containing compound metabolism; chlorophyll biosynthesis (light-independent). In terms of biological role, component of the dark-operative protochlorophyllide reductase (DPOR) that uses Mg-ATP and reduced ferredoxin to reduce ring D of protochlorophyllide (Pchlide) to form chlorophyllide a (Chlide). This reaction is light-independent. The L component serves as a unique electron donor to the NB-component of the complex, and binds Mg-ATP. This is Light-independent protochlorophyllide reductase iron-sulfur ATP-binding protein from Trichodesmium erythraeum (strain IMS101).